The chain runs to 395 residues: Flagellin B (395 aa).

It belongs to the bacterial flagellin family.

The protein localises to the secreted. It localises to the bacterial flagellum. Functionally, flagellin is the subunit protein which polymerizes to form the filaments of bacterial flagella. This is Flagellin B (flaB) from Rhizobium meliloti (Ensifer meliloti).